A 629-amino-acid polypeptide reads, in one-letter code: Hemocyanin F chain (629 aa).

Positions 172, 176, 203, 324, 328, and 364 each coordinate Cu cation. N-linked (GlcNAc...) asparagine glycosylation is found at Asn395 and Asn447. Polar residues predominate over residues 503-513 (SESSVTVSHTP). Positions 503–522 (SESSVTVSHTPTFEELQRGE) are disordered. Asn527 is a glycosylation site (N-linked (GlcNAc...) asparagine). A disulfide bridge links Cys534 with Cys582. Asn615 is a glycosylation site (N-linked (GlcNAc...) asparagine).

Belongs to the tyrosinase family. Hemocyanin subfamily. As to quaternary structure, tarantula hemocyanin is a 24-chain polymer with seven different chains identified. Hemolymph.

The protein localises to the secreted. It is found in the extracellular space. In terms of biological role, hemocyanins are copper-containing oxygen carriers occurring freely dissolved in the hemolymph of many mollusks and arthropods. The chain is Hemocyanin F chain (HCF) from Aphonopelma sp. (American tarantula).